The primary structure comprises 1806 residues: SH3 and multiple ankyrin repeat domains protein 3 (1806 aa).

Residues 76–150 form an intramolecular interaction with the ANK repeats region; the sequence is MDGPGASAVV…KFLDEERLLQ (75 aa). Position 197 is a phosphotyrosine (Tyr197). ANK repeat units follow at residues 223–253, 257–286, 290–320, 324–353, 357–386, and 390–420; these read SGEC…HLDF, DGLT…SPDY, RGLT…QLGI, NGWQ…DMGA, SGNT…NRDV, and NSQT…DVVP. Positions 407–416 are enriched in basic and acidic residues; the sequence is AEVIKTHKDS. Positions 407 to 467 are disordered; that stretch reads AEVIKTHKDS…AQPAASPGPS (61 aa). A compositionally biased stretch (pro residues) spans 439–461; it reads LASPRPLQRSASDINLKGEAQPA. A phosphoserine mark is found at Ser448, Ser450, Ser463, Ser470, and Ser558. The region spanning 546–605 is the SH3 domain; it reads VPGRKFIAVKAHSPQGEGEIPLHRGEAVKVLSIGEGGFWEGTVKGRTGWFPADCVEEVQM. Phosphotyrosine is present on Tyr631. The PDZ domain occupies 646 to 740; the sequence is VAVLQKRDHE…RLVMKVVSVT (95 aa). Disordered stretches follow at residues 665-689 and 760-853; these read KAET…ESVD and PSTT…KGIP. The segment at 753–760 is required for interaction with ABI1; that stretch reads PPPPKRAP. At Ser770 the chain carries Phosphoserine. A compositionally biased stretch (pro residues) spans 813-845; the sequence is ATVKQRPTSRRITPAEISSLFERQGLPGPEKLP. A phosphoserine mark is found at Ser857, Ser866, and Ser877. Positions 871 to 1021 are disordered; that stretch reads RFPRSTSMQD…FSASLFAPSK (151 aa). Residues 906–915 show a composition bias toward pro residues; that stretch reads DSGPPPAFSP. Residues Ser966 and Ser973 each carry the phosphoserine modification. Phosphothreonine is present on Thr988. Residues 993 to 1013 are compositionally biased toward gly residues; the sequence is PKRRPRPPGPDSPYANLGAFS. Tyr1006 is subject to Phosphotyrosine. Asymmetric dimethylarginine is present on Arg1041. Over residues 1115 to 1124 the composition is skewed to low complexity; it reads PGADLPSLQP. 3 disordered regions span residues 1115-1460, 1475-1525, and 1546-1584; these read PGAD…MSTL, ADGH…HHAA, and SKLW…KDTR. Residues 1173–1193 are compositionally biased toward basic and acidic residues; that stretch reads TGKPLDPSSPLALALAARERA. Thr1204 bears the Phosphothreonine mark. 4 positions are modified to phosphoserine: Ser1208, Ser1233, Ser1237, and Ser1240. The segment covering 1251–1261 has biased composition (pro residues); the sequence is EAEKVPREERK. Thr1309 is modified (phosphothreonine). Ser1328 is modified (phosphoserine). Positions 1360 to 1370 are enriched in basic and acidic residues; it reads LPPAQLSSSDE. Composition is skewed to low complexity over residues 1371–1392 and 1444–1460; these read ETRE…ANGV and HLET…MSTL. An SH3-binding motif is present at residues 1485-1491; sequence PPVPPKP. Ser1495 carries the phosphoserine modification. The segment covering 1495 to 1505 has biased composition (polar residues); sequence SPLGKGPVTFR. A coiled-coil region spans residues 1569–1589; sequence ISELSSRLQQLNKDTRSLGEE. Residues Ser1585, Ser1596, Ser1604, and Ser1614 each carry the phosphoserine modification. Low complexity predominate over residues 1627-1637; that stretch reads PGGPGGGASYS. Positions 1627–1664 are disordered; the sequence is PGGPGGGASYSVRPSGRYPVARRAPSPVKPASLERVEG. Over residues 1638–1657 the composition is skewed to pro residues; sequence VRPSGRYPVARRAPSPVKPA. Residues Ser1709, Ser1711, and Ser1713 each carry the phosphoserine modification. Residues 1743-1806 form the SAM domain; that stretch reads WSKFDVGDWL…ERALRQLDGS (64 aa).

May homomultimerize via its SAM domain. Interacts with BAIAP2, DBNL and SLC17A7/VGLUT1. Interacts with DLGAP1/GKAP, GRM1/MGLUR1, GRM5/MGLUR5 and LZTS3 C-termini via its PDZ domain. Interacts with ABI1, HOMER1, HOMER2, HOMER3 and CTTN/cortactin SH3 domain. Is part of a complex with DLG4/PSD-95 and DLGAP1/GKAP. Interacts (via PDZ domain) with the GRIA1 subunit of the AMPA receptor (via PDZ-binding motif). Interacts with WASF1 and CYFIP2; the interactions mediate the association of SHANK3 with the WAVE1 complex. Interacts with ARPC2; the interaction probably mediates the association of SHANK3 with the Arp2/3 complex. Interacts (via ANK repeats) with SHARPIN and SPTAN1. Interacts (via PDZ domain) with ARHGAP44 (probably via PDZ-binding motif); the interaction takes place in dendritic spines and promotes GRIA1 exocytosis. Interacts with CAMK2A. Interacts with DIP2A. Interacts with ADGRL3. In terms of tissue distribution, expressed in the cerebral cortex and the cerebellum.

It localises to the cytoplasm. Its subcellular location is the postsynaptic density. The protein resides in the cell projection. It is found in the dendritic spine. Major scaffold postsynaptic density protein which interacts with multiple proteins and complexes to orchestrate the dendritic spine and synapse formation, maturation and maintenance. Interconnects receptors of the postsynaptic membrane including NMDA-type and metabotropic glutamate receptors via complexes with GKAP/PSD-95 and HOMER, respectively, and the actin-based cytoskeleton. Plays a role in the structural and functional organization of the dendritic spine and synaptic junction through the interaction with Arp2/3 and WAVE1 complex as well as the promotion of the F-actin clusters. By way of this control of actin dynamics, participates in the regulation of developing neurons growth cone motility and the NMDA receptor-signaling. Also modulates GRIA1 exocytosis and GRM5/MGLUR5 expression and signaling to control the AMPA and metabotropic glutamate receptor-mediated synaptic transmission and plasticity. May be required at an early stage of synapse formation and be inhibited by IGF1 to promote synapse maturation. This Homo sapiens (Human) protein is SH3 and multiple ankyrin repeat domains protein 3 (SHANK3).